Reading from the N-terminus, the 101-residue chain is uncharacterized protein (101 aa).

Residues 76–101 (KGNVTRRRKKTHLGNDDGKKEAQEKM) are disordered. Over residues 88 to 101 (LGNDDGKKEAQEKM) the composition is skewed to basic and acidic residues.

This is an uncharacterized protein from Homo sapiens (Human).